Consider the following 251-residue polypeptide: NADPH-dependent oxidoreductase (251 aa).

It belongs to the flavin oxidoreductase frp family. FMN is required as a cofactor.

Its function is as follows. Reduces FMN, organic nitro compounds and disulfide DTNB. Involved in maintenance of the cellular redox state and the disulfide stress response. In Staphylococcus aureus (strain bovine RF122 / ET3-1), this protein is NADPH-dependent oxidoreductase (nfrA).